Reading from the N-terminus, the 132-residue chain is Small ribosomal subunit protein uS11 (132 aa).

Belongs to the universal ribosomal protein uS11 family. Part of the 30S ribosomal subunit. Interacts with proteins S7 and S18. Binds to IF-3.

Located on the platform of the 30S subunit, it bridges several disparate RNA helices of the 16S rRNA. Forms part of the Shine-Dalgarno cleft in the 70S ribosome. The polypeptide is Small ribosomal subunit protein uS11 (Leifsonia xyli subsp. xyli (strain CTCB07)).